The sequence spans 284 residues: Bifunctional protein FolD 1 (284 aa).

NADP(+)-binding positions include 166–168 (GAS), S191, and I232.

Belongs to the tetrahydrofolate dehydrogenase/cyclohydrolase family. Homodimer.

The catalysed reaction is (6R)-5,10-methylene-5,6,7,8-tetrahydrofolate + NADP(+) = (6R)-5,10-methenyltetrahydrofolate + NADPH. It carries out the reaction (6R)-5,10-methenyltetrahydrofolate + H2O = (6R)-10-formyltetrahydrofolate + H(+). It participates in one-carbon metabolism; tetrahydrofolate interconversion. Its function is as follows. Catalyzes the oxidation of 5,10-methylenetetrahydrofolate to 5,10-methenyltetrahydrofolate and then the hydrolysis of 5,10-methenyltetrahydrofolate to 10-formyltetrahydrofolate. This chain is Bifunctional protein FolD 1, found in Hydrogenovibrio crunogenus (strain DSM 25203 / XCL-2) (Thiomicrospira crunogena).